Reading from the N-terminus, the 397-residue chain is Protein RecA (397 aa).

The disordered stretch occupies residues 1 to 23; the sequence is MALETKPAKDPAAEDKHELDPKR. 83-90 is an ATP binding site; it reads GPESSGKT.

Belongs to the RecA family.

Its subcellular location is the cytoplasm. In terms of biological role, can catalyze the hydrolysis of ATP in the presence of single-stranded DNA, the ATP-dependent uptake of single-stranded DNA by duplex DNA, and the ATP-dependent hybridization of homologous single-stranded DNAs. It interacts with LexA causing its activation and leading to its autocatalytic cleavage. In Bifidobacterium longum (strain NCC 2705), this protein is Protein RecA.